The chain runs to 313 residues: Acetaldehyde dehydrogenase (313 aa).

Residue 13–16 coordinates NAD(+); sequence SGNI. Catalysis depends on C133, which acts as the Acyl-thioester intermediate. NAD(+)-binding positions include 164–172 and N291; that span reads SAGPGTRAN.

It belongs to the acetaldehyde dehydrogenase family.

The enzyme catalyses acetaldehyde + NAD(+) + CoA = acetyl-CoA + NADH + H(+). The sequence is that of Acetaldehyde dehydrogenase from Cupriavidus pinatubonensis (strain JMP 134 / LMG 1197) (Cupriavidus necator (strain JMP 134)).